A 167-amino-acid polypeptide reads, in one-letter code: Small ribosomal subunit protein uS5 (167 aa).

Residues 12-75 (LQEKLIAVNR…EKARRNIVTV (64 aa)) form the S5 DRBM domain.

Belongs to the universal ribosomal protein uS5 family. In terms of assembly, part of the 30S ribosomal subunit. Contacts proteins S4 and S8.

In terms of biological role, with S4 and S12 plays an important role in translational accuracy. Located at the back of the 30S subunit body where it stabilizes the conformation of the head with respect to the body. This chain is Small ribosomal subunit protein uS5, found in Shewanella baltica (strain OS223).